The sequence spans 407 residues: Argininosuccinate synthase (407 aa).

Residues 10–18 (AYSGGLDTS) and Ala-37 each bind ATP. The L-citrulline site is built by Tyr-90 and Ser-95. Gly-120 is a binding site for ATP. L-aspartate-binding residues include Thr-122, Asn-126, and Asp-127. L-citrulline is bound at residue Asn-126. L-citrulline contacts are provided by Arg-130, Ser-181, Ser-190, Glu-266, and Tyr-278.

This sequence belongs to the argininosuccinate synthase family. Type 1 subfamily. As to quaternary structure, homotetramer.

The protein resides in the cytoplasm. It catalyses the reaction L-citrulline + L-aspartate + ATP = 2-(N(omega)-L-arginino)succinate + AMP + diphosphate + H(+). Its pathway is amino-acid biosynthesis; L-arginine biosynthesis; L-arginine from L-ornithine and carbamoyl phosphate: step 2/3. The polypeptide is Argininosuccinate synthase (Ruegeria sp. (strain TM1040) (Silicibacter sp.)).